Consider the following 192-residue polypeptide: UPF0312 protein Psyr_0457 (192 aa).

Positions 1 to 23 (MLKKSLAALALGTALLSAGQAMA) are cleaved as a signal peptide.

It belongs to the UPF0312 family. Type 1 subfamily.

It is found in the periplasm. The chain is UPF0312 protein Psyr_0457 from Pseudomonas syringae pv. syringae (strain B728a).